The chain runs to 298 residues: Fluorinase (298 aa).

S-adenosyl-L-methionine-binding positions include Asp14, 19–21 (DDS), Tyr75, Ser156, Asp209, Asn214, 268–269 (SR), and 276–278 (RNA).

This sequence belongs to the SAM hydrolase / SAM-dependent halogenase family.

The enzyme catalyses fluoride + S-adenosyl-L-methionine = 5'-deoxy-5'-fluoroadenosine + L-methionine. In terms of biological role, catalyzes the formation of a C-F bond by combining S-adenosyl-L-methionine (SAM) and fluoride to generate 5'-fluoro-5'-deoxyadenosine (5'-FDA) and L-methionine. This chain is Fluorinase, found in Actinoplanes sp. (strain N902-109).